Reading from the N-terminus, the 32-residue chain is MSDINATRVPAWLAECPCVGDDISHLLTRGEK.

Positions 1 to 10 are excised as a propeptide; that stretch reads MSDINATRVP. The segment at residues 11–17 is a cross-link (cyclopeptide (Ala-Pro)); the sequence is AWLAECP. Positions 18 to 32 are excised as a propeptide; the sequence is CVGDDISHLLTRGEK.

The protein belongs to the MSDIN fungal toxin family. Processed by the macrocyclase-peptidase enzyme POPB to yield a toxic cyclic heptapeptide. POPB first removes 10 residues from the N-terminus. Conformational trapping of the remaining peptide forces the enzyme to release this intermediate rather than proceed to macrocyclization. The enzyme rebinds the remaining peptide in a different conformation and catalyzes macrocyclization of the N-terminal 7 residues.

Its function is as follows. Probable toxin that belongs to the MSDIN-like toxin family responsible for a large number of food poisoning cases and deaths. The polypeptide is MSDIN-like toxin proprotein 2 (Amanita rimosa).